An 883-amino-acid chain; its full sequence is Collagen, type I, alpha 1b (883 aa).

Residues 1–883 (QMSYVDHSKS…LGGSNDVELR (883 aa)) are disordered. Pro residues predominate over residues 13-33 (PPQPGPMGPMGPRGPPGPPGS). Composition is skewed to low complexity over residues 34-57 (SGPQ…AMGS), 113-122 (VPGVMGARGR), and 129-140 (SGARGNDGNTGP). Gly residues-rich tracts occupy residues 147-161 (TGGE…GNEG) and 185-194 (GTDGGPGAKG). Composition is skewed to low complexity over residues 195 to 205 (SPGAAGLAGAP), 214 to 223 (AQGAVGAPGP), and 230 to 248 (PGAS…PGPA). Residues 285–297 (GADGGAGGKGAPG) show a composition bias toward gly residues. 2 stretches are compositionally biased toward low complexity: residues 310–326 (ATGE…PGSK) and 390–402 (VGAP…AGPA). A compositionally biased stretch (gly residues) spans 415 to 424 (GAPGLGGPTG). Low complexity predominate over residues 425–444 (ARGAPGPAGNDGAKGEPGAA). Gly residues-rich tracts occupy residues 445 to 454 (GAPGGLGAPG) and 478 to 487 (GGKGGDGAPG). The span at 512 to 542 (AGPTGPRGETGPPGPAGFAGPPGADGQPGAK) shows a compositional bias: low complexity. Residues 564-573 (GPKGGAGPPG) are compositionally biased toward gly residues. Low complexity-rich tracts occupy residues 574-584 (ATGFPGPAGRV), 717-726 (APGAVGPSGK), and 742-756 (SGPA…PAGA). Positions 757–771 (KGDRGEAGEAGDRGH) are enriched in basic and acidic residues. The segment covering 792 to 812 (PAGASGPAGPRGPAGSNGAPG) has biased composition (low complexity). Residues 821-836 (AGPPGPPGPAGPPGPP) show a composition bias toward pro residues.

It belongs to the fibrillar collagen family.

In Epinephelus costae (Goldblotch grouper), this protein is Collagen, type I, alpha 1b.